The sequence spans 359 residues: 3-isopropylmalate dehydrogenase (359 aa).

76–89 contacts NAD(+); it reads GPKWDTIERSIRPE. Residues Arg96, Arg106, Arg134, and Asp225 each contribute to the substrate site. Residues Asp225, Asp249, and Asp253 each contribute to the Mg(2+) site. 283 to 295 is a binding site for NAD(+); that stretch reads GSAPDIAGQNVAN.

Belongs to the isocitrate and isopropylmalate dehydrogenases family. LeuB type 1 subfamily. In terms of assembly, homodimer. Mg(2+) is required as a cofactor. Requires Mn(2+) as cofactor.

It is found in the cytoplasm. It catalyses the reaction (2R,3S)-3-isopropylmalate + NAD(+) = 4-methyl-2-oxopentanoate + CO2 + NADH. It functions in the pathway amino-acid biosynthesis; L-leucine biosynthesis; L-leucine from 3-methyl-2-oxobutanoate: step 3/4. Catalyzes the oxidation of 3-carboxy-2-hydroxy-4-methylpentanoate (3-isopropylmalate) to 3-carboxy-4-methyl-2-oxopentanoate. The product decarboxylates to 4-methyl-2 oxopentanoate. This Acinetobacter baylyi (strain ATCC 33305 / BD413 / ADP1) protein is 3-isopropylmalate dehydrogenase.